Here is a 266-residue protein sequence, read N- to C-terminus: 3-methyl-2-oxobutanoate hydroxymethyltransferase 2 (266 aa).

Residues D45 and D84 each coordinate Mg(2+). Residues 45–46 (DS), D84, and K112 contribute to the 3-methyl-2-oxobutanoate site. E114 provides a ligand contact to Mg(2+). The active-site Proton acceptor is the E181.

This sequence belongs to the PanB family. Homodecamer; pentamer of dimers. It depends on Mg(2+) as a cofactor.

The protein localises to the cytoplasm. It carries out the reaction 3-methyl-2-oxobutanoate + (6R)-5,10-methylene-5,6,7,8-tetrahydrofolate + H2O = 2-dehydropantoate + (6S)-5,6,7,8-tetrahydrofolate. The protein operates within cofactor biosynthesis; (R)-pantothenate biosynthesis; (R)-pantoate from 3-methyl-2-oxobutanoate: step 1/2. Catalyzes the reversible reaction in which hydroxymethyl group from 5,10-methylenetetrahydrofolate is transferred onto alpha-ketoisovalerate to form ketopantoate. The polypeptide is 3-methyl-2-oxobutanoate hydroxymethyltransferase 2 (Pseudomonas aeruginosa (strain ATCC 15692 / DSM 22644 / CIP 104116 / JCM 14847 / LMG 12228 / 1C / PRS 101 / PAO1)).